The following is a 526-amino-acid chain: MNEHLHVGSHGQIQVQQLFEDNSNKRTVLTTQPNGLTTLGKSGLPVVQDRQSESAHRRQGSSSSLKSTDGTGKVKASVMTPEQAMKQYMQKLTTFEHNEIFGYTEIYFLGPNAKKRQGVIGGPNNCGYDDDQGSYIQVPHDHIAYRYEVLKVIGKGSFGQVVKAYDHKMHQHVALKMVRNEKRFHRQAAEEIRILEHLRKQDKDNNMNVIHMLENFTFRSHICMTFELLSMNLYELIKKNKFQGFSLPLVRKFAHSILQCLDALHKNRIIHCDLKPENILLKQQGRSGIKVIDFGSSCYEHQRVYTYIQSRFYRAPEVILGARYGMPIDMWSLGCILAELLTGYPLLPGEDEGDQLACMIELLGMPSPKLLDSSKRAKNFVSSKGYPRYCTITTLSDGSIILNGGRSRRGKLRGPPESREWGNALKGCDDPLFLDFLKQCLEWDPAIRMTPSQALRHPWLRRRLPKPPTGEKASAKRITESTGAITSISKLPPTSSSASKLRTNLAQMTDANGNIQQRTVLPKLVS.

2 stretches are compositionally biased toward polar residues: residues 30–40 and 60–70; these read TTQPNGLTTLG and GSSSSLKSTDG. Residues 30–76 are disordered; it reads TTQPNGLTTLGKSGLPVVQDRQSESAHRRQGSSSSLKSTDGTGKVKA. The residue at position 31 (Thr-31) is a Phosphothreonine; by ATM. Residues 114-116 carry the Nuclear localization signal motif; it reads KKR. Residues 147–460 enclose the Protein kinase domain; it reads YEVLKVIGKG…PSQALRHPWL (314 aa). ATP-binding positions include 153-161, Lys-176, and 226-229; these read IGKGSFGQV and FELL. The active-site Proton acceptor is Asp-273. Tyr-307 is modified (phosphotyrosine). Ser-367 carries the post-translational modification Phosphoserine; by ATM. Residues 462–499 form a disordered region; that stretch reads RRLPKPPTGEKASAKRITESTGAITSISKLPPTSSSAS. The segment covering 480–499 has biased composition (polar residues); that stretch reads ESTGAITSISKLPPTSSSAS.

This sequence belongs to the protein kinase superfamily. CMGC Ser/Thr protein kinase family. MNB/DYRK subfamily. In terms of assembly, interacts with MDM2. Requires Mg(2+) as cofactor. It depends on Mn(2+) as a cofactor. Post-translationally, phosphorylated on serine/threonine residues. Phosphorylation on Thr-31 and Ser-367 by ATM in response to genotoxic stress disrupts MDM2 binding and prevents MDM2-mediated ubiquitination and subsequent proteasome degradation, thus promoting p53/TP53-mediated apoptosis. Ubiquitination in nucleus by MDM2 in normal conditions leads to proteasome degradation.

It is found in the cytoplasm. It localises to the nucleus. It catalyses the reaction L-seryl-[protein] + ATP = O-phospho-L-seryl-[protein] + ADP + H(+). The enzyme catalyses L-threonyl-[protein] + ATP = O-phospho-L-threonyl-[protein] + ADP + H(+). The catalysed reaction is L-tyrosyl-[protein] + ATP = O-phospho-L-tyrosyl-[protein] + ADP + H(+). With respect to regulation, autophosphorylates on tyrosine residues. Its function is as follows. Serine/threonine-protein kinase involved in the control of mitotic transition and the regulation of cellular growth and/or development. In Gallus gallus (Chicken), this protein is Dual specificity tyrosine-phosphorylation-regulated kinase 2.